The primary structure comprises 161 residues: Phosphopantetheine adenylyltransferase (161 aa).

Thr11 contributes to the substrate binding site. Residues 11 to 12 and His19 contribute to the ATP site; that span reads TF. Substrate is bound by residues Lys43, Thr75, and Arg89. ATP is bound by residues 90 to 92, Glu100, and 125 to 131; these read GLR and YSFLSSS.

It belongs to the bacterial CoaD family. As to quaternary structure, homohexamer. Mg(2+) is required as a cofactor.

Its subcellular location is the cytoplasm. It carries out the reaction (R)-4'-phosphopantetheine + ATP + H(+) = 3'-dephospho-CoA + diphosphate. It participates in cofactor biosynthesis; coenzyme A biosynthesis; CoA from (R)-pantothenate: step 4/5. In terms of biological role, reversibly transfers an adenylyl group from ATP to 4'-phosphopantetheine, yielding dephospho-CoA (dPCoA) and pyrophosphate. This chain is Phosphopantetheine adenylyltransferase, found in Listeria welshimeri serovar 6b (strain ATCC 35897 / DSM 20650 / CCUG 15529 / CIP 8149 / NCTC 11857 / SLCC 5334 / V8).